The sequence spans 175 residues: Putative FAS1 domain-containing protein 081L (175 aa).

The region spanning 28-172 (GPIVPSVWTI…GLVHIVDQFP (145 aa)) is the FAS1 domain.

This chain is Putative FAS1 domain-containing protein 081L, found in Invertebrate iridescent virus 3 (IIV-3).